A 1210-amino-acid chain; its full sequence is Histone-lysine N-methyltransferase EHMT2 (1210 aa).

A compositionally biased stretch (low complexity) spans 1-23 (MAAAAGAAAAAAAEGEAPAEMGA). Disordered stretches follow at residues 1-262 (MAAA…LEEW) and 280-386 (DERV…EYME). N-acetylalanine is present on Ala2. The segment covering 26-38 (LEKETRGATERVH) has biased composition (basic and acidic residues). Ser40 is modified (phosphoserine). The residue at position 44 (Thr44) is a Phosphothreonine. A Phosphoserine modification is found at Ser47. Residues 105–128 (GRILLGHATKSFPSSPSKGGSCPS) are compositionally biased toward low complexity. Ser140 carries the phosphoserine modification. Residues 155–165 (PGAQGAAAAGS) are compositionally biased toward low complexity. Ser173 is modified (phosphoserine). An N6,N6,N6-trimethyllysine; by EHMT2; alternate modification is found at Lys185. An N6,N6-dimethyllysine; by EHMT2; alternate modification is found at Lys185. A compositionally biased stretch (basic and acidic residues) spans 198–216 (PEKRPPEIQHFRMSDDVHS). Residues Lys219 and Lys229 each participate in a glycyl lysine isopeptide (Lys-Gly) (interchain with G-Cter in SUMO2) cross-link. A phosphoserine mark is found at Ser232, Ser242, and Ser246. Residues 280–291 (DERVDSDSKSEV) are compositionally biased toward basic and acidic residues. A compositionally biased stretch (acidic residues) spans 298-327 (LSEEEEEEEEEEEEEEEEEEEEEEEEDEES). Residues 338 to 347 (GRRKAKKKWR) show a composition bias toward basic residues. Residues Ser350, Ser412, and Ser413 each carry the phosphoserine modification. A disordered region spans residues 548–608 (IPRGDGVTPP…LADTIDSSGP (61 aa)). Thr555 bears the Phosphothreonine mark. Ser569 is modified (phosphoserine). Lys634 is covalently cross-linked (Glycyl lysine isopeptide (Lys-Gly) (interchain with G-Cter in SUMO2)). ANK repeat units lie at residues 649–678 (FHPR…DPNF), 684–713 (SKRT…NINA), 717–746 (QQRT…CVYS), 750–780 (DGST…DVNA), 784–813 (GGWT…DVTL), 817–846 (EENI…DLHA), and 850–879 (HGDT…NPEL). The tract at residues 817 to 819 (EEN) is histone H3K9me binding. One can recognise a Pre-SET domain in the interval 972–1035 (QHCTCVDDCS…NCKNRVVQSG (64 aa)). Residues Cys974, Cys976, Cys980, Cys985, Cys987, Cys1017, Cys1021, Cys1023, and Cys1027 each coordinate Zn(2+). In terms of domain architecture, SET spans 1038 to 1155 (VRLQLYRTAK…TGEELGFDYG (118 aa)). S-adenosyl-L-methionine-binding positions include 1048-1050 (MGW), Tyr1085, and 1112-1113 (NH). Residues 1074–1093 (DAEADVREDDSYLFDLDNKD) form an interaction with histone H3 region. Residue Cys1115 coordinates Zn(2+). Residues 1154 to 1157 (YGDR) are interaction with histone H3. The Post-SET domain occupies 1164–1180 (KYFTCQCGSEKCKHSAE). Cys1168 lines the Zn(2+) pocket. S-adenosyl-L-methionine is bound at residue Gln1169. Zn(2+) is bound by residues Cys1170 and Cys1175. Ser1204 is modified (phosphoserine). Thr1210 carries the phosphothreonine modification.

The protein belongs to the class V-like SAM-binding methyltransferase superfamily. Histone-lysine methyltransferase family. Suvar3-9 subfamily. In terms of assembly, heterodimer; heterodimerizes with EHMT1/GLP. Interacts with GFI1B and WIZ. Part of the E2F6.com-1 complex in G0 phase composed of E2F6, MGA, MAX, TFDP1, CBX3, BAT8, EHMT1, RING1, RNF2, MBLR, L3MBTL2 and YAF2. Part of a complex composed of TRIM28, HDAC1, HDAC2 and EHMT2. Interacts with UHRF1. Interacts with CDYL. Interacts with REST only in the presence of CDYL. Part of a complex containing at least CDYL, REST, WIZ, SETB1, EHMT1 and EHMT2. Interacts with PRDM9 and CDYL; interaction only takes place when PRDM9 is bound to hotspot DNA. Interacts with SMYD5. Methylated at Lys-185; automethylated. As to expression, expressed in all tissues examined, with high levels in fetal liver, thymus, lymph node, spleen and peripheral blood leukocytes and lower level in bone marrow.

The protein resides in the nucleus. It is found in the chromosome. It catalyses the reaction N(6)-methyl-L-lysyl(9)-[histone H3] + S-adenosyl-L-methionine = N(6),N(6)-dimethyl-L-lysyl(9)-[histone H3] + S-adenosyl-L-homocysteine + H(+). The enzyme catalyses L-lysyl(9)-[histone H3] + S-adenosyl-L-methionine = N(6)-methyl-L-lysyl(9)-[histone H3] + S-adenosyl-L-homocysteine + H(+). Its function is as follows. Histone methyltransferase that specifically mono- and dimethylates 'Lys-9' of histone H3 (H3K9me1 and H3K9me2, respectively) in euchromatin. H3K9me represents a specific tag for epigenetic transcriptional repression by recruiting HP1 proteins to methylated histones. Also mediates monomethylation of 'Lys-56' of histone H3 (H3K56me1) in G1 phase, leading to promote interaction between histone H3 and PCNA and regulating DNA replication. Also weakly methylates 'Lys-27' of histone H3 (H3K27me). Also required for DNA methylation, the histone methyltransferase activity is not required for DNA methylation, suggesting that these 2 activities function independently. Probably targeted to histone H3 by different DNA-binding proteins like E2F6, MGA, MAX and/or DP1. May also methylate histone H1. In addition to the histone methyltransferase activity, also methylates non-histone proteins: mediates dimethylation of 'Lys-373' of p53/TP53. Also methylates CDYL, WIZ, ACIN1, DNMT1, HDAC1, ERCC6, KLF12 and itself. The chain is Histone-lysine N-methyltransferase EHMT2 (EHMT2) from Homo sapiens (Human).